An 80-amino-acid chain; its full sequence is Diphthamide biosynthesis protein 3 (80 aa).

Positions 4–60 constitute a DPH-type MB domain; sequence FHDEVEIEDFEFDEEKDVYHYPCPCGDRFEIPREMLEMGEDVAQCPSCSLLIRVIYD. Cysteine 26, cysteine 28, cysteine 48, and cysteine 51 together coordinate Fe cation.

Belongs to the DPH3 family. As to quaternary structure, component of the 2-(3-amino-3-carboxypropyl)histidine synthase complex composed of dph-1, dph-2, dph-3 and a NADH-dependent reductase. Requires Fe(2+) as cofactor.

It catalyses the reaction [3Fe-4S](1+)-[protein] + Fe(2+)-[Dph3] = [3Fe-4S](0)-[protein] + Fe(3+)-[Dph3]. The catalysed reaction is 2 [3Fe-4S](0)-[protein] + 2 Fe(2+)-[Dph3] + NADH = 2 [4Fe-4S](1+)-[protein] + 2 [Dph3] + NAD(+) + H(+). The protein operates within protein modification; peptidyl-diphthamide biosynthesis. Its function is as follows. Required for the first step of diphthamide biosynthesis, a post-translational modification of histidine which occurs in elongation factor 2. Dph-1 and dph-2 transfer a 3-amino-3-carboxypropyl (ACP) group from S-adenosyl-L-methionine (SAM) to a histidine residue, the reaction is assisted by a reduction system comprising dph-3 and a NADH-dependent reductase. Acts as an electron donor to reduce the Fe-S cluster in dph1-dph2 keeping the [4Fe-4S] clusters in the active and reduced state. Restores iron to dph-1-dph-2 iron-sulfur clusters which have degraded from [4Fe-4S] to [3Fe-4S] by donating an iron atom to reform [4Fe-4S] clusters, in a manner dependent on the presence of elongation factor 2 and SAM. Associates with the elongator complex and is required for tRNA Wobble base modifications mediated by the elongator complex. The elongator complex is required for multiple tRNA modifications, including mcm5U (5-methoxycarbonylmethyl uridine), mcm5s 2U (5-methoxycarbonylmethyl-2-thiouridine), and ncm5U (5-carbamoylmethyl uridine). This is Diphthamide biosynthesis protein 3 from Caenorhabditis elegans.